Here is a 636-residue protein sequence, read N- to C-terminus: Chaperone protein DnaK (636 aa).

Phosphothreonine; by autocatalysis is present on Thr198. Positions 602–636 (QAEGAQPGGEAAGEASAKDEKVVDADFEEVKDDKK) are disordered. Acidic residues predominate over residues 626–636 (ADFEEVKDDKK).

The protein belongs to the heat shock protein 70 family.

In terms of biological role, acts as a chaperone. The chain is Chaperone protein DnaK from Geobacter sulfurreducens (strain ATCC 51573 / DSM 12127 / PCA).